The chain runs to 579 residues: Glucans biosynthesis protein G (579 aa).

The signal sequence occupies residues 1-37 (MIVSPHKASRIPGNRLRKALMASAALVGLMSAGQLWA). Positions 516-579 (AKPAEEAKHD…TWSYQLPADE (64 aa)) are disordered. A compositionally biased stretch (basic and acidic residues) spans 517–539 (KPAEEAKHDKTAAKHGKAEKAAK).

It belongs to the OpgD/OpgG family.

Its subcellular location is the periplasm. It functions in the pathway glycan metabolism; osmoregulated periplasmic glucan (OPG) biosynthesis. Its function is as follows. Involved in the biosynthesis of osmoregulated periplasmic glucans (OPGs). This is Glucans biosynthesis protein G from Pseudomonas putida (strain W619).